Reading from the N-terminus, the 1354-residue chain is Eukaryotic translation initiation factor 3 subunit A (1354 aa).

At K68 the chain carries N6-acetyllysine. Positions 82-120 (NIKSLEDVVRAYLKLAEEKTEAAKEESQQMVLDIEDLDN) form a coiled coil. The region spanning 315–498 (MQRMSTRVLL…RTLSFGSDLN (184 aa)) is the PCI domain. A phosphoserine mark is found at S492 and S584. The segment at 664-835 (LDPDFIMAKQ…REERERAERA (172 aa)) is interaction with EIF3B. Disordered stretches follow at residues 809–844 (EKEE…LREY), 866–1249 (EERE…RDRD), and 1262–1354 (DLRD…TVRR). Composition is skewed to basic and acidic residues over residues 866 to 1136 (EERE…DDAR), 1148 to 1249 (GWRE…RDRD), 1262 to 1302 (DLRD…DPPR), and 1310 to 1343 (SRER…TKNE). S895 is subject to Phosphoserine. One copy of the 1; truncated repeat lies at 924–931 (DDERPHRR). A 22 X 10 AA approximate tandem repeats of [DA]-[DE]-[ED]-R-[PLIGFSV]-[RPS]-[RW]-[RL]-[GNIHT]-[DGLPTAM] region spans residues 924 to 1143 (DDERPHRRDE…DARPGPWRPF (220 aa)). Copy 2 of the repeat occupies 932-941 (DEDRLRRLGG). One copy of the 3; approximate repeat lies at 942–951 (DDEERESSLR). A Phosphoserine modification is found at S949. Repeat copies occupy residues 953-962 (DDDRIPRRGL), 963-972 (DDDRGPRRGP), 973-982 (DEDRFSRRGT), 983-992 (DDDRPSWRNA), 993-1002 (DDDRPPRRIG), 1003-1012 (DDDRGSWRHT), 1013-1022 (DDDRPPRRGL), 1023-1032 (DDDRPPRRGL), 1033-1042 (DDERGSWRTA), 1043-1052 (EEDRGPRRGM), 1053-1062 (DDDRGPRRGG), 1064-1073 (DDERSSWRNA), 1074-1083 (DDDRGPRRGM), 1084-1093 (DDDRGPRRGL), 1094-1103 (DDDRGPWRNA), 1104-1113 (AEDRISRRGA), 1114-1123 (DDDRGPWRNM), and 1124-1133 (DDDRVPRRGD). The residue at position 1038 (S1038) is a Phosphoserine. A 22; approximate repeat occupies 1134-1143 (DARPGPWRPF). 2 positions are modified to phosphoserine: S1159 and S1233. 2 positions are modified to phosphoserine: S1310 and S1336.

The protein belongs to the eIF-3 subunit A family. Component of the eukaryotic translation initiation factor 3 (eIF-3) complex, which is composed of 13 subunits: EIF3A, EIF3B, EIF3C, EIF3D, EIF3E, EIF3F, EIF3G, EIF3H, EIF3I, EIF3J, EIF3K, EIF3L and EIF3M. The eIF-3 complex appears to include 3 stable modules: module A is composed of EIF3A, EIF3B, EIF3G and EIF3I; module B is composed of EIF3F, EIF3H, and EIF3M; and module C is composed of EIF3C, EIF3D, EIF3E, EIF3L and EIF3K. EIF3C of module C binds EIF3B of module A and EIF3H of module B, thereby linking the three modules. EIF3J is a labile subunit that binds to the eIF-3 complex via EIF3B. The eIF-3 complex interacts with RPS6KB1 under conditions of nutrient depletion. Mitogenic stimulation leads to binding and activation of a complex composed of MTOR and RPTOR, leading to phosphorylation and release of RPS6KB1 and binding of EIF4B to eIF-3. Interacts with EIF4G1. Also interacts with KRT7 and PIWIL2. Phosphorylated. Phosphorylation is enhanced upon serum stimulation.

The protein localises to the cytoplasm. In terms of biological role, RNA-binding component of the eukaryotic translation initiation factor 3 (eIF-3) complex, which is required for several steps in the initiation of protein synthesis. The eIF-3 complex associates with the 40S ribosome and facilitates the recruitment of eIF-1, eIF-1A, eIF-2:GTP:methionyl-tRNAi and eIF-5 to form the 43S pre-initiation complex (43S PIC). The eIF-3 complex stimulates mRNA recruitment to the 43S PIC and scanning of the mRNA for AUG recognition. The eIF-3 complex is also required for disassembly and recycling of post-termination ribosomal complexes and subsequently prevents premature joining of the 40S and 60S ribosomal subunits prior to initiation. The eIF-3 complex specifically targets and initiates translation of a subset of mRNAs involved in cell proliferation, including cell cycling, differentiation and apoptosis, and uses different modes of RNA stem-loop binding to exert either translational activation or repression. This chain is Eukaryotic translation initiation factor 3 subunit A (Eif3a), found in Rattus norvegicus (Rat).